The following is a 231-amino-acid chain: MANVSKRLRALKEKIDRSRNYPVVDALQLVKDSATAKFDESIDVAVNLGVDARKSDQMVRGAVVLPKGIGKTVRVAVFAQGDNAQKARDAGADIVGFDDLAADIKAGKMDFDVVIATPDAMRVVGQLGQILGPRGLMPNPKVGTVSPDVVGAVKNAKAGQVQYRTDKGGIVHCTIGRASFSVDDLKENLVALLDALQRAKPASSKGIYFKRLSVSSTMGVGVRVDQGSVAA.

This sequence belongs to the universal ribosomal protein uL1 family. In terms of assembly, part of the 50S ribosomal subunit.

Its function is as follows. Binds directly to 23S rRNA. The L1 stalk is quite mobile in the ribosome, and is involved in E site tRNA release. In terms of biological role, protein L1 is also a translational repressor protein, it controls the translation of the L11 operon by binding to its mRNA. This chain is Large ribosomal subunit protein uL1, found in Thiobacillus denitrificans (strain ATCC 25259 / T1).